A 304-amino-acid chain; its full sequence is Deoxyribonuclease-1-like 1 (304 aa).

Residues 1 to 24 (MPYMAMHGLTVALLLIFLAGGTEA) form the signal peptide. N-linked (GlcNAc...) asparagine glycosylation occurs at asparagine 92. Glutamate 103 is an active-site residue. Asparagine 123 carries an N-linked (GlcNAc...) asparagine glycan. The active site involves histidine 154. Cysteines 193 and 230 form a disulfide. Asparagine 229 carries N-linked (GlcNAc...) asparagine glycosylation.

Belongs to the DNase I family.

It is found in the endoplasmic reticulum. This chain is Deoxyribonuclease-1-like 1 (DNASE1L1), found in Cricetulus griseus (Chinese hamster).